Here is a 327-residue protein sequence, read N- to C-terminus: WRKY transcription factor WRKY76 (327 aa).

Residues Ala-56–Val-76 are a coiled coil. Residues Arg-87–Glu-135 are disordered. The Nuclear localization signal signature appears at Lys-106–Ser-112. Positions Glu-114–His-126 are enriched in polar residues. Positions Asp-160–Pro-226 form a DNA-binding region, WRKY.

Belongs to the WRKY group II-a family.

The protein resides in the nucleus. Transcription repressor. Interacts specifically with the W box (5'-(T)TGAC[CT]-3'), a frequently occurring elicitor-responsive cis-acting element. Regulates, probably indirectly, the activation of defense-related genes during defense response. Modulates plant innate immunity against X.oryzae pv. oryzae (Xoo). This Oryza sativa subsp. japonica (Rice) protein is WRKY transcription factor WRKY76.